Consider the following 400-residue polypeptide: 3-phenylpropionate/cinnamic acid dioxygenase ferredoxin--NAD(+) reductase component (400 aa).

5-36 (TIIIVGGGQAAAMAAASLRQQGFTGELHLFSD) provides a ligand contact to FAD. Residue 146 to 174 (SVVIVGAGTIGLELAASATQRRCKVTVIE) participates in NAD(+) binding.

This sequence belongs to the bacterial ring-hydroxylating dioxygenase ferredoxin reductase family. This dioxygenase system consists of four proteins: the two subunits of the hydroxylase component (HcaE and HcaF), a ferredoxin (HcaC) and a ferredoxin reductase (HcaD). FAD serves as cofactor.

It catalyses the reaction 2 reduced [2Fe-2S]-[ferredoxin] + NAD(+) + H(+) = 2 oxidized [2Fe-2S]-[ferredoxin] + NADH. It participates in aromatic compound metabolism; 3-phenylpropanoate degradation. Part of the multicomponent 3-phenylpropionate dioxygenase, that converts 3-phenylpropionic acid (PP) and cinnamic acid (CI) into 3-phenylpropionate-dihydrodiol (PP-dihydrodiol) and cinnamic acid-dihydrodiol (CI-dihydrodiol), respectively. The chain is 3-phenylpropionate/cinnamic acid dioxygenase ferredoxin--NAD(+) reductase component from Shigella sonnei (strain Ss046).